A 263-amino-acid chain; its full sequence is 2-keto-4-pentenoate hydratase 1 (263 aa).

This sequence belongs to the hydratase/decarboxylase family. MhpD subfamily. Requires a divalent metal cation as cofactor.

The enzyme catalyses (S)-4-hydroxy-2-oxopentanoate = (2Z)-2-hydroxypenta-2,4-dienoate + H2O. The protein operates within aromatic compound metabolism; 3-phenylpropanoate degradation. Its function is as follows. Catalyzes the conversion of 2-hydroxypentadienoic acid (enolic form of 2-oxopent-4-enoate) to 4-hydroxy-2-ketopentanoic acid. This Dechloromonas aromatica (strain RCB) protein is 2-keto-4-pentenoate hydratase 1.